We begin with the raw amino-acid sequence, 284 residues long: Elongation factor Ts (284 aa).

Positions 80 to 83 (TDFV) are involved in Mg(2+) ion dislocation from EF-Tu.

The protein belongs to the EF-Ts family.

The protein localises to the cytoplasm. Its function is as follows. Associates with the EF-Tu.GDP complex and induces the exchange of GDP to GTP. It remains bound to the aminoacyl-tRNA.EF-Tu.GTP complex up to the GTP hydrolysis stage on the ribosome. This Neisseria gonorrhoeae (strain ATCC 700825 / FA 1090) protein is Elongation factor Ts.